Consider the following 167-residue polypeptide: Putative peroxiredoxin-B (167 aa).

A Thioredoxin domain is found at 4-167 (IKRGDRFPTT…STAQKIIAKL (164 aa)). Cys53 (cysteine sulfenic acid (-SOH) intermediate) is an active-site residue. Residues 165 to 167 (AKL) carry the Microbody targeting signal motif.

Belongs to the peroxiredoxin family. Prx5 subfamily.

The protein localises to the peroxisome membrane. It carries out the reaction a hydroperoxide + [thioredoxin]-dithiol = an alcohol + [thioredoxin]-disulfide + H2O. Thiol-specific peroxidase that catalyzes the reduction of hydrogen peroxide and organic hydroperoxides to water and alcohols, respectively. Plays a role in cell protection against oxidative stress by detoxifying peroxides and as sensor of hydrogen peroxide-mediated signaling events. The sequence is that of Putative peroxiredoxin-B (PMPB) from Candida boidinii (Yeast).